The following is a 176-amino-acid chain: PRELI domain-containing protein 2 (176 aa).

A PRELI/MSF1 domain is found at 1 to 175 (MGIAVEARKV…ILRERCGCPF (175 aa)).

The chain is PRELI domain-containing protein 2 (prelid2) from Xenopus tropicalis (Western clawed frog).